Consider the following 1020-residue polypeptide: Calcium-transporting ATPase 1 (1020 aa).

The residue at position 1 (methionine 1) is an N-acetylmethionine. Residues 1–162 (MESYLNENFG…NQFTESPSRG (162 aa)) lie on the Stromal side of the membrane. Positions 21–32 (ALQRWRKLCWIV) are interaction with calmodulin. Serine 46 carries the post-translational modification Phosphoserine; by CPK. Residues 163–183 (FWLFVWEALQDTTLMILAACA) form a helical membrane-spanning segment. At 184-201 (FVSLIVGILMEGWPIGAH) the chain is on the lumenal side. Residues 202–222 (DGLGIVASILLVVFVTATSDY) form a helical membrane-spanning segment. Topologically, residues 223–350 (RQSLQFKDLD…DDETPLQVKL (128 aa)) are stromal. The helical transmembrane segment at 351–370 (NGVATIIGKIGLFFAVITFA) threads the bilayer. At 371–400 (VLVQGLANQKRLDNSHWIWTADELMAMLEY) the chain is on the lumenal side. The chain crosses the membrane as a helical span at residues 401 to 418 (FAVAVTIVVVAVPEGLPL). Residues 419–813 (AVTLSLAFAM…KWGRSVYINI (395 aa)) are Stromal-facing. Aspartate 456 functions as the 4-aspartylphosphate intermediate in the catalytic mechanism. The Mg(2+) site is built by aspartate 758 and aspartate 762. The chain crosses the membrane as a helical span at residues 814–832 (QKFVQFQLTVNVVALIVNF). Residues 833 to 843 (LSACLTGNAPL) are Lumenal-facing. The helical transmembrane segment at 844 to 864 (TAVQLLWVNMIMDTLGALALA) threads the bilayer. Topologically, residues 865–884 (TEPPQDDLMKRSPVGRKGNF) are stromal. A helical transmembrane segment spans residues 885–907 (ISNVMWRNILGQSLYQLVIIWCL). The Lumenal portion of the chain corresponds to 908–919 (QTKGKTMFGLDG). Residues 920 to 941 (PDSDLTLNTLIFNIFVFCQVFN) form a helical membrane-spanning segment. The Stromal portion of the chain corresponds to 942–959 (EISSREMEKIDVFKGILK). A helical transmembrane segment spans residues 960–981 (NYVFVAVLTCTVVFQVIIIELL). Over 982 to 991 (GTFADTTPLN) the chain is Lumenal. A helical membrane pass occupies residues 992–1013 (LGQWLVSIILGFLGMPVAAALK). Over 1014–1020 (MIPVGSH) the chain is Stromal.

Belongs to the cation transport ATPase (P-type) (TC 3.A.3) family. Type IIB subfamily. Expressed at higher levels in roots than in leaves.

The protein localises to the plastid. It localises to the chloroplast inner membrane. The catalysed reaction is Ca(2+)(in) + ATP + H2O = Ca(2+)(out) + ADP + phosphate + H(+). Its activity is regulated as follows. Activated by calmodulin. In terms of biological role, this magnesium-dependent enzyme catalyzes the hydrolysis of ATP coupled with the translocation of calcium from the cytosol out of the cell or into organelles. The polypeptide is Calcium-transporting ATPase 1 (ACA1) (Arabidopsis thaliana (Mouse-ear cress)).